Here is a 677-residue protein sequence, read N- to C-terminus: Methionine--tRNA ligase (677 aa).

A 'HIGH' region motif is present at residues 15 to 25 (PYANGSIHLGH). Zn(2+) is bound by residues Cys-146, Cys-149, Cys-159, and Cys-162. Residues 333-337 (KMSKS) carry the 'KMSKS' region motif. Lys-336 contributes to the ATP binding site. Positions 575-677 (DFAKVDLRVA…AGAKPGHQVK (103 aa)) constitute a tRNA-binding domain.

It belongs to the class-I aminoacyl-tRNA synthetase family. MetG type 1 subfamily. In terms of assembly, homodimer. The cofactor is Zn(2+).

It localises to the cytoplasm. It catalyses the reaction tRNA(Met) + L-methionine + ATP = L-methionyl-tRNA(Met) + AMP + diphosphate. Its function is as follows. Is required not only for elongation of protein synthesis but also for the initiation of all mRNA translation through initiator tRNA(fMet) aminoacylation. This chain is Methionine--tRNA ligase, found in Escherichia coli (strain ATCC 8739 / DSM 1576 / NBRC 3972 / NCIMB 8545 / WDCM 00012 / Crooks).